The following is a 226-amino-acid chain: Ribose-5-phosphate isomerase A (226 aa).

Residues 33-36 (TGST), 86-89 (DGAD), and 99-102 (KGGG) each bind substrate. E108 acts as the Proton acceptor in catalysis. K126 is a substrate binding site.

It belongs to the ribose 5-phosphate isomerase family. Homodimer.

It catalyses the reaction aldehydo-D-ribose 5-phosphate = D-ribulose 5-phosphate. It functions in the pathway carbohydrate degradation; pentose phosphate pathway; D-ribose 5-phosphate from D-ribulose 5-phosphate (non-oxidative stage): step 1/1. Its function is as follows. Catalyzes the reversible conversion of ribose-5-phosphate to ribulose 5-phosphate. The polypeptide is Ribose-5-phosphate isomerase A (Bordetella bronchiseptica (strain ATCC BAA-588 / NCTC 13252 / RB50) (Alcaligenes bronchisepticus)).